A 226-amino-acid polypeptide reads, in one-letter code: NifU-like protein 1, chloroplastic (226 aa).

Residues Met1–Thr76 constitute a chloroplast transit peptide.

Belongs to the NifU family. In terms of assembly, homodimer; disulfide-linked.

The protein localises to the plastid. It localises to the chloroplast stroma. In terms of biological role, molecular scaffold for [Fe-S] cluster assembly of chloroplastic iron-sulfur proteins. The sequence is that of NifU-like protein 1, chloroplastic (NIFU1) from Oryza sativa subsp. japonica (Rice).